The sequence spans 348 residues: 4-hydroxy-3-methylbut-2-en-1-yl diphosphate synthase (flavodoxin) (348 aa).

Cysteine 263, cysteine 266, cysteine 298, and glutamate 305 together coordinate [4Fe-4S] cluster.

Belongs to the IspG family. The cofactor is [4Fe-4S] cluster.

The catalysed reaction is (2E)-4-hydroxy-3-methylbut-2-enyl diphosphate + oxidized [flavodoxin] + H2O + 2 H(+) = 2-C-methyl-D-erythritol 2,4-cyclic diphosphate + reduced [flavodoxin]. It participates in isoprenoid biosynthesis; isopentenyl diphosphate biosynthesis via DXP pathway; isopentenyl diphosphate from 1-deoxy-D-xylulose 5-phosphate: step 5/6. In terms of biological role, converts 2C-methyl-D-erythritol 2,4-cyclodiphosphate (ME-2,4cPP) into 1-hydroxy-2-methyl-2-(E)-butenyl 4-diphosphate. The protein is 4-hydroxy-3-methylbut-2-en-1-yl diphosphate synthase (flavodoxin) of Dehalococcoides mccartyi (strain ATCC BAA-2100 / JCM 16839 / KCTC 5957 / BAV1).